The following is an 82-amino-acid chain: Putative membrane protein insertion efficiency factor (82 aa).

This sequence belongs to the UPF0161 family.

Its subcellular location is the cell inner membrane. Functionally, could be involved in insertion of integral membrane proteins into the membrane. The polypeptide is Putative membrane protein insertion efficiency factor (Thermus thermophilus (strain ATCC BAA-163 / DSM 7039 / HB27)).